Reading from the N-terminus, the 591-residue chain is Aspartate--tRNA(Asp/Asn) ligase (591 aa).

Glu-174 contributes to the L-aspartate binding site. Positions 198–201 (QLFK) are aspartate. An L-aspartate-binding site is contributed by Arg-220. ATP contacts are provided by residues 220 to 222 (RDE) and Gln-229. L-aspartate is bound at residue His-450. ATP is bound at residue Glu-483. Arg-490 contributes to the L-aspartate binding site. Residue 535-538 (GLDR) coordinates ATP.

It belongs to the class-II aminoacyl-tRNA synthetase family. Type 1 subfamily. In terms of assembly, homodimer.

Its subcellular location is the cytoplasm. The catalysed reaction is tRNA(Asx) + L-aspartate + ATP = L-aspartyl-tRNA(Asx) + AMP + diphosphate. In terms of biological role, aspartyl-tRNA synthetase with relaxed tRNA specificity since it is able to aspartylate not only its cognate tRNA(Asp) but also tRNA(Asn). Reaction proceeds in two steps: L-aspartate is first activated by ATP to form Asp-AMP and then transferred to the acceptor end of tRNA(Asp/Asn). The protein is Aspartate--tRNA(Asp/Asn) ligase of Pseudomonas putida (strain GB-1).